We begin with the raw amino-acid sequence, 308 residues long: D-alanine--D-alanine ligase (308 aa).

An ATP-grasp domain is found at 106 to 305; sequence KMLWKAFGLP…FEQLVVKILE (200 aa). 136–191 serves as a coordination point for ATP; that stretch reads VEKLGLPLMVKPSLEGSSVGLTKVNAIDDLKSAVEFALQYDETVLIEEWLSGDELT. The Mg(2+) site is built by D259, E272, and N274.

The protein belongs to the D-alanine--D-alanine ligase family. The cofactor is Mg(2+). It depends on Mn(2+) as a cofactor.

It localises to the cytoplasm. It catalyses the reaction 2 D-alanine + ATP = D-alanyl-D-alanine + ADP + phosphate + H(+). Its pathway is cell wall biogenesis; peptidoglycan biosynthesis. Its function is as follows. Cell wall formation. This Histophilus somni (strain 2336) (Haemophilus somnus) protein is D-alanine--D-alanine ligase.